Here is a 233-residue protein sequence, read N- to C-terminus: MFFICNVGPFRSWKESKIFWKMEDGSPNDIQLILVTATDSSLPSGNSNQDKFCKFGFVCLSTSFERGVESDNGRDWNFCLIIISSWAVLPVPGGPVMYSESDLCSEIAFAKKFITCSYSAVLAGNAPSLLFKLTSSDDFCKSAFVLKKIDCEPNCSFSGDDSGVTSVNCNFFLFKGRGGVAGASSNRFLLIRLVGVIGIADMNVYGTIDENSAAQCSEYSKIVLPENIPLLYK.

The next 3 helical transmembrane spans lie at F78–Y98, F113–L133, and F188–I208.

Its subcellular location is the membrane. This is an uncharacterized protein from Saccharomyces cerevisiae (strain ATCC 204508 / S288c) (Baker's yeast).